The sequence spans 427 residues: 3-phosphoshikimate 1-carboxyvinyltransferase (427 aa).

Residues Lys22, Ser23, and Arg27 each coordinate 3-phosphoshikimate. Lys22 serves as a coordination point for phosphoenolpyruvate. 2 residues coordinate phosphoenolpyruvate: Gly96 and Arg124. Ser169, Ser170, Gln171, Ser197, Asp313, Asn336, and Lys340 together coordinate 3-phosphoshikimate. Position 171 (Gln171) interacts with phosphoenolpyruvate. The active-site Proton acceptor is Asp313. Residues Arg344, Arg386, and Lys411 each contribute to the phosphoenolpyruvate site.

The protein belongs to the EPSP synthase family. Monomer.

It is found in the cytoplasm. It carries out the reaction 3-phosphoshikimate + phosphoenolpyruvate = 5-O-(1-carboxyvinyl)-3-phosphoshikimate + phosphate. The protein operates within metabolic intermediate biosynthesis; chorismate biosynthesis; chorismate from D-erythrose 4-phosphate and phosphoenolpyruvate: step 6/7. Catalyzes the transfer of the enolpyruvyl moiety of phosphoenolpyruvate (PEP) to the 5-hydroxyl of shikimate-3-phosphate (S3P) to produce enolpyruvyl shikimate-3-phosphate and inorganic phosphate. The polypeptide is 3-phosphoshikimate 1-carboxyvinyltransferase (Klebsiella pneumoniae (strain 342)).